The following is a 173-amino-acid chain: Ribosome maturation factor RimM (173 aa).

A PRC barrel domain is found at 98-171; sequence DDQYYYDEII…LITIDALEGL (74 aa).

The protein belongs to the RimM family. As to quaternary structure, binds ribosomal protein uS19.

Its subcellular location is the cytoplasm. In terms of biological role, an accessory protein needed during the final step in the assembly of 30S ribosomal subunit, possibly for assembly of the head region. Essential for efficient processing of 16S rRNA. May be needed both before and after RbfA during the maturation of 16S rRNA. It has affinity for free ribosomal 30S subunits but not for 70S ribosomes. The protein is Ribosome maturation factor RimM of Leuconostoc mesenteroides subsp. mesenteroides (strain ATCC 8293 / DSM 20343 / BCRC 11652 / CCM 1803 / JCM 6124 / NCDO 523 / NBRC 100496 / NCIMB 8023 / NCTC 12954 / NRRL B-1118 / 37Y).